A 1076-amino-acid polypeptide reads, in one-letter code: Carbamoyl phosphate synthase large chain (1076 aa).

Residues 1 to 402 (MPKREDIRKI…ALQKAIRSLE (402 aa)) are carboxyphosphate synthetic domain. 12 residues coordinate ATP: Arg129, Arg169, Gly175, Gly176, Glu208, Val210, Glu215, Gly241, Val242, His243, Gln285, and Glu299. In terms of domain architecture, ATP-grasp 1 spans 133-328 (KEAMRKIGLD…IAKIAAKLAV (196 aa)). Gln285, Glu299, and Asn301 together coordinate Mg(2+). Residues Gln285, Glu299, and Asn301 each contribute to the Mn(2+) site. The interval 403–555 (IGRYGLGCDG…YSTYEDENEA (153 aa)) is oligomerization domain. The carbamoyl phosphate synthetic domain stretch occupies residues 556 to 939 (LRSERKKVMI…YKAELAAGMK (384 aa)). The ATP-grasp 2 domain occupies 680–871 (AELLERLNIP…LAKIAAKLMM (192 aa)). ATP contacts are provided by Arg716, Lys755, Leu757, Glu762, Gly787, Val788, His789, Ser790, Gln830, and Glu842. Mg(2+) contacts are provided by Gln830, Glu842, and Asn844. Mn(2+) is bound by residues Gln830, Glu842, and Asn844. Positions 938–1076 (MKLPLKGTVF…KSIQEYHEES (139 aa)) constitute an MGS-like domain. Residues 940-1076 (LPLKGTVFIS…KSIQEYHEES (137 aa)) form an allosteric domain region.

This sequence belongs to the CarB family. As to quaternary structure, composed of two chains; the small (or glutamine) chain promotes the hydrolysis of glutamine to ammonia, which is used by the large (or ammonia) chain to synthesize carbamoyl phosphate. Tetramer of heterodimers (alpha,beta)4. Requires Mg(2+) as cofactor. Mn(2+) is required as a cofactor.

It catalyses the reaction hydrogencarbonate + L-glutamine + 2 ATP + H2O = carbamoyl phosphate + L-glutamate + 2 ADP + phosphate + 2 H(+). It carries out the reaction hydrogencarbonate + NH4(+) + 2 ATP = carbamoyl phosphate + 2 ADP + phosphate + 2 H(+). It participates in amino-acid biosynthesis; L-arginine biosynthesis; carbamoyl phosphate from bicarbonate: step 1/1. Its pathway is pyrimidine metabolism; UMP biosynthesis via de novo pathway; (S)-dihydroorotate from bicarbonate: step 1/3. Large subunit of the glutamine-dependent carbamoyl phosphate synthetase (CPSase). CPSase catalyzes the formation of carbamoyl phosphate from the ammonia moiety of glutamine, carbonate, and phosphate donated by ATP, constituting the first step of 2 biosynthetic pathways, one leading to arginine and/or urea and the other to pyrimidine nucleotides. The large subunit (synthetase) binds the substrates ammonia (free or transferred from glutamine from the small subunit), hydrogencarbonate and ATP and carries out an ATP-coupled ligase reaction, activating hydrogencarbonate by forming carboxy phosphate which reacts with ammonia to form carbamoyl phosphate. In Archaeoglobus fulgidus (strain ATCC 49558 / DSM 4304 / JCM 9628 / NBRC 100126 / VC-16), this protein is Carbamoyl phosphate synthase large chain.